The chain runs to 139 residues: Nucleoside diphosphate kinase (139 aa).

Residues Lys-10, Phe-58, Arg-86, Thr-92, Arg-103, and Asn-113 each coordinate ATP. Catalysis depends on His-116, which acts as the Pros-phosphohistidine intermediate.

Belongs to the NDK family. As to quaternary structure, homotetramer. Mg(2+) serves as cofactor.

Its subcellular location is the cytoplasm. The enzyme catalyses a 2'-deoxyribonucleoside 5'-diphosphate + ATP = a 2'-deoxyribonucleoside 5'-triphosphate + ADP. It carries out the reaction a ribonucleoside 5'-diphosphate + ATP = a ribonucleoside 5'-triphosphate + ADP. In terms of biological role, major role in the synthesis of nucleoside triphosphates other than ATP. The ATP gamma phosphate is transferred to the NDP beta phosphate via a ping-pong mechanism, using a phosphorylated active-site intermediate. This chain is Nucleoside diphosphate kinase, found in Caulobacter sp. (strain K31).